The sequence spans 165 residues: Phosphopantetheine adenylyltransferase (165 aa).

Belongs to the eukaryotic CoaD family.

The protein localises to the cytoplasm. It catalyses the reaction (R)-4'-phosphopantetheine + ATP + H(+) = 3'-dephospho-CoA + diphosphate. It functions in the pathway cofactor biosynthesis; coenzyme A biosynthesis. In terms of biological role, reversibly transfers an adenylyl group from ATP to 4'-phosphopantetheine, yielding dephospho-CoA (dPCoA) and pyrophosphate. The sequence is that of Phosphopantetheine adenylyltransferase from Thermococcus kodakarensis (strain ATCC BAA-918 / JCM 12380 / KOD1) (Pyrococcus kodakaraensis (strain KOD1)).